The chain runs to 37 residues: MVEALLSGIVLGLVPVTIAGLFVTAYLQYRRGDQLNI.

A helical membrane pass occupies residues 5-25; it reads LLSGIVLGLVPVTIAGLFVTA.

Belongs to the PetG family. The 4 large subunits of the cytochrome b6-f complex are cytochrome b6, subunit IV (17 kDa polypeptide, PetD), cytochrome f and the Rieske protein, while the 4 small subunits are PetG, PetL, PetM and PetN. The complex functions as a dimer.

It is found in the plastid. The protein resides in the chloroplast thylakoid membrane. Component of the cytochrome b6-f complex, which mediates electron transfer between photosystem II (PSII) and photosystem I (PSI), cyclic electron flow around PSI, and state transitions. PetG is required for either the stability or assembly of the cytochrome b6-f complex. This chain is Cytochrome b6-f complex subunit 5, found in Chlorella vulgaris (Green alga).